The chain runs to 561 residues: Potassium-transporting ATPase potassium-binding subunit (561 aa).

12 consecutive transmembrane segments (helical) span residues 1–21, 62–82, 132–152, 173–193, 253–273, 283–303, 327–347, 356–376, 379–399, 416–436, 483–503, and 526–546; these read MMAS…LLAR, YLLA…LILM, GLTV…FALM, ITLY…VSQG, FVQM…FGDV, LLWS…WAEV, FGIL…CGAV, ALGG…FGGV, GLYG…LMIG, MTAL…ALAM, MLLA…VLAI, and LFIA…FIPA.

This sequence belongs to the KdpA family. As to quaternary structure, the system is composed of three essential subunits: KdpA, KdpB and KdpC.

The protein localises to the cell inner membrane. In terms of biological role, part of the high-affinity ATP-driven potassium transport (or Kdp) system, which catalyzes the hydrolysis of ATP coupled with the electrogenic transport of potassium into the cytoplasm. This subunit binds the periplasmic potassium ions and delivers the ions to the membrane domain of KdpB through an intramembrane tunnel. The polypeptide is Potassium-transporting ATPase potassium-binding subunit (Erwinia tasmaniensis (strain DSM 17950 / CFBP 7177 / CIP 109463 / NCPPB 4357 / Et1/99)).